A 357-amino-acid polypeptide reads, in one-letter code: Serine protease 1 (357 aa).

The signal sequence occupies residues 1–29; the sequence is MRRTTRARTGLSALLLAASLGLGAAPAGA. Residues 30–170 constitute a propeptide that is removed on maturation; sequence DAPQRPAPTP…TRVPGVFQRE (141 aa). Cys-184 and Cys-204 form a disulfide bridge. Active-site charge relay system residues include His-203, Asp-232, and Ser-313. Cys-307 and Cys-333 form a disulfide bridge.

Belongs to the peptidase S1 family.

It is found in the secreted. Functionally, serine protease that preferentially cleaves peptide bonds on the C-terminal side of aspartate and glutamate with a 10-fold higher reactivity for a glutamyl bond than an aspartyl bond. In Streptomyces fradiae (Streptomyces roseoflavus), this protein is Serine protease 1.